The chain runs to 503 residues: Probable cytosol aminopeptidase (503 aa).

Mn(2+)-binding residues include Lys270 and Asp275. The active site involves Lys282. Mn(2+) is bound by residues Asp293, Asp352, and Glu354. The active site involves Arg356.

Belongs to the peptidase M17 family. It depends on Mn(2+) as a cofactor.

The protein localises to the cytoplasm. The catalysed reaction is Release of an N-terminal amino acid, Xaa-|-Yaa-, in which Xaa is preferably Leu, but may be other amino acids including Pro although not Arg or Lys, and Yaa may be Pro. Amino acid amides and methyl esters are also readily hydrolyzed, but rates on arylamides are exceedingly low.. It catalyses the reaction Release of an N-terminal amino acid, preferentially leucine, but not glutamic or aspartic acids.. Functionally, presumably involved in the processing and regular turnover of intracellular proteins. Catalyzes the removal of unsubstituted N-terminal amino acids from various peptides. The sequence is that of Probable cytosol aminopeptidase from Shigella boydii serotype 4 (strain Sb227).